Here is a 272-residue protein sequence, read N- to C-terminus: Undecaprenyl-diphosphatase (272 aa).

Helical transmembrane passes span 5–25 (YSLFVAFVLGVVEGLTEFLPV), 45–65 (AKTFEVIIQLGSILAVVVVFW), 88–108 (HLTLGHILLAMIPAVGLGLAF), 115–135 (LFNPQSVMYALVAGGLLLLAA), 152–171 (TYRQAFAIGCFQCLALWPGF), 189–209 (YAASEFSFILAVPMMLGASGL), 221–241 (GDLPMFAVGFITAFVVALIAI), and 251–271 (ISFVPFAIYRFIVAAAVYWVF).

Belongs to the UppP family.

Its subcellular location is the cell inner membrane. The catalysed reaction is di-trans,octa-cis-undecaprenyl diphosphate + H2O = di-trans,octa-cis-undecaprenyl phosphate + phosphate + H(+). Its function is as follows. Catalyzes the dephosphorylation of undecaprenyl diphosphate (UPP). Confers resistance to bacitracin. The chain is Undecaprenyl-diphosphatase from Yersinia enterocolitica serotype O:8 / biotype 1B (strain NCTC 13174 / 8081).